The chain runs to 314 residues: tRNA pseudouridine synthase B (314 aa).

Histidine 43 lines the substrate pocket. The Nucleophile role is filled by aspartate 48. Substrate is bound by residues tyrosine 76, tyrosine 179, and leucine 200.

The protein belongs to the pseudouridine synthase TruB family. Type 1 subfamily.

It carries out the reaction uridine(55) in tRNA = pseudouridine(55) in tRNA. Functionally, responsible for synthesis of pseudouridine from uracil-55 in the psi GC loop of transfer RNAs. This Salmonella paratyphi A (strain ATCC 9150 / SARB42) protein is tRNA pseudouridine synthase B.